The chain runs to 275 residues: Monooxygenase af470 (275 aa).

It catalyses the reaction prefumagillin + NADPH + 2 O2 = fumagillin + acetaldehyde + NADP(+) + H2O. It participates in secondary metabolite biosynthesis; terpenoid biosynthesis. Monooxygenase; part of the gene cluster that mediates the biosynthesis of fumagillin, a meroterpenoid that has numerous biological activities including irreversible inhibition of human type 2 methionine aminopeptidase (METAP2). Within the pathway, the monooxygenase af470 catalyzes the oxidative cleavage of prefumagillin to yield the final compound of the pathway, fumagillin. The pathway begins with the conversion of farnesyl pyrophosphate (FPP) to beta-trans-bergamotene by the membrane-bound beta-trans-bergamotene synthase af520. The multifunctional cytochrome P450 monooxygenase af510 then converts beta-trans-bergamotene into 5-keto-demethoxyfumagillol via several oxydation steps. 5-keto-demethoxyfumagillol is then subjected to successive C-6 hydroxylation and O-methylation by the dioxygenase af480 and O-methyltransferase af390-400, respectively, to yield 5-keto-fumagillol, which is then stereoselectively reduced by the keto-reductase af490 to 5R-hydroxy-seco-sesquiterpene. The next step is the polyketide transferase af380-catalyzed transfer of a dodecapentaenoyl group synthesized by the polyketide synthase af370 onto 5R-hydroxy-seco-sesquiterpene which leads to the production of prefumagillin. Finally, oxidative cleavage by the monooxygenase af470 converts prefumagillin to fumagillin. This is Monooxygenase af470 from Aspergillus fumigatus (strain ATCC MYA-4609 / CBS 101355 / FGSC A1100 / Af293) (Neosartorya fumigata).